Consider the following 158-residue polypeptide: 14-3-3 protein gamma (158 aa).

An interaction with SPATA18/MIEAP region spans residues 1 to 158 (AAAMKNVTEL…TSDQQDDDGG (158 aa)). Residue Ser-48 is modified to Phosphoserine. The residue at position 60 (Tyr-60) is a Phosphotyrosine. Thr-72 bears the Phosphothreonine mark. The residue at position 130 (Ser-130) is a Phosphoserine. The residue at position 149 (Thr-149) is a Phosphothreonine. The residue at position 150 (Ser-150) is a Phosphoserine.

The protein belongs to the 14-3-3 family. In terms of assembly, homodimer. Part of a complex that contains DSG3, PKP1, YAP1 and YWHAG; the complex is required for localization of DSG3 and YAP1 to the cell membrane in keratinocytes. Interacts with SAMSN1. Interacts with RAF1, SSH1 and CRTC2/TORC2. Interacts with ABL1 (phosphorylated form); the interaction retains it in the cytoplasm. Interacts with GAB2. Interacts with MDM4 (phosphorylated); negatively regulates MDM4 activity toward TP53. Interacts with PKA-phosphorylated AANAT and SIRT2. Interacts with the 'Thr-369' phosphorylated form of DAPK2. Interacts with PI4KB, TBC1D22A and TBC1D22B. Interacts with SLITRK1. Interacts with LRRK2; this interaction is dependent on LRRK2 phosphorylation. Interacts with MARK2 and MARK3. Interacts with MEFV. Interacts with ENDOG, TSC2 and PIK3C3; interaction with ENDOG weakens its interaction with TSC2 and PIK3C3. Interacts with (phosphorylated) WDR24. Interacts with BEST1; this interaction promotes L-glutamate channel activity leading to the positive regulation of NMDA glutamate receptor activity through the L-glutamate secretion. Interacts with PKP1 (when phosphorylated); the interaction results in translocation of PKP1 to the cytoplasm and loss of intercellular adhesion in keratinocytes. Interacts with SPATA18/MIEAP; a protein that also plays a role in MALM. Post-translationally, phosphorylated by various PKC isozymes.

Its subcellular location is the cytoplasm. The protein localises to the cytosol. It is found in the mitochondrion matrix. Its function is as follows. Adapter protein implicated in the regulation of a large spectrum of both general and specialized signaling pathways. Binds to a large number of partners, usually by recognition of a phosphoserine or phosphothreonine motif. Binding generally results in the modulation of the activity of the binding partner. Promotes inactivation of WDR24 component of the GATOR2 complex by binding to phosphorylated WDR24. Participates in the positive regulation of NMDA glutamate receptor activity by promoting the L-glutamate secretion through interaction with BEST1. Reduces keratinocyte intercellular adhesion, via interacting with PKP1 and sequestering it in the cytoplasm, thereby reducing its incorporation into desmosomes. Plays a role in mitochondrial protein catabolic process (also named MALM) that promotes the degradation of damaged proteins inside mitochondria. This chain is 14-3-3 protein gamma, found in Ovis aries (Sheep).